We begin with the raw amino-acid sequence, 75 residues long: Endogenous retrovirus group K member 24 Np9 protein (75 aa).

The interval 22 to 43 (TAPKRQRPSRTGHDDDGGFVEK) is disordered. Residues 32–43 (TGHDDDGGFVEK) are compositionally biased toward basic and acidic residues.

In terms of tissue distribution, transcript detectable in many tumor cell lines and tumor tissues.

It localises to the nucleus. Its function is as follows. May possess a function in tumorigenesis. The protein is Endogenous retrovirus group K member 24 Np9 protein (ERVK-24) of Homo sapiens (Human).